A 470-amino-acid polypeptide reads, in one-letter code: MFCHLHCMLVVFSLLLTLTGSFVNAQTTEVVTEITATTADPPDPCASNPCTIASTHCVAAGESHTCECRPGYFETNGNCTVAQQFAGSFSVTQVGGSNVLYSADLADTDSAAFASLAADVEDALDTVYQASTMADIYLGSEVWGVPEWLYRGRLHVLFATEDAGQPVLVNSTDATEAFTTALAAEAANLGITIDDSTITVSDFDECASADDNDCDPNANCTNTAGSFTCECDTELYDNSPNTEEPGRVCIAPCDPGLCTRPNEICNNGGTIEDDNLCKCIEGYDYTQYGDCDPMARSTDFRCYHCEDSIDNVKCNGRMESENGTARQCPNPTDTCYQTIQMNPEGDGFMIRKGCMNLEDCYDLLYSYEADPAKASCFEYIFPYGQDTPPGPGVQCHYCCSEYFPLDLCNYDSIHFIYGTPRINSWDPRMNWDLSMNLDATEEPESGSQRHLPVCGVLSLVVTTLLALMLH.

The N-terminal stretch at 1-25 (MFCHLHCMLVVFSLLLTLTGSFVNA) is a signal peptide. Positions 41-80 (PPDPCASNPCTIASTHCVAAGESHTCECRPGYFETNGNCT) constitute an EGF-like 1 domain. 3 disulfides stabilise this stretch: C45/C57, C50/C66, and C68/C79. 3 N-linked (GlcNAc...) asparagine glycosylation sites follow: N78, N170, and N219. Residues 81–205 (VAQQFAGSFS…STITVSDFDE (125 aa)) form the SEA domain. In terms of domain architecture, EGF-like 2; calcium-binding spans 202 to 250 (DFDECASADDNDCDPNANCTNTAGSFTCECDTELYDNSPNTEEPGRVCI). Intrachain disulfides connect C206-C220, C214-C229, C231-C249, C253-C265, C258-C277, and C279-C291. One can recognise an EGF-like 3 domain in the interval 249-292 (CIAPCDPGLCTRPNEICNNGGTIEDDNLCKCIEGYDYTQYGDCD). Residue N322 is glycosylated (N-linked (GlcNAc...) asparagine). Residue G446 is the site of GPI-anchor amidated glycine attachment. Positions 447–470 (SQRHLPVCGVLSLVVTTLLALMLH) are cleaved as a propeptide — removed in mature form.

In terms of tissue distribution, sperm.

Its subcellular location is the cell projection. The protein resides in the cilium. The protein localises to the flagellum membrane. The polypeptide is 63 kDa sperm flagellar membrane protein (Strongylocentrotus purpuratus (Purple sea urchin)).